The primary structure comprises 133 residues: Fluoride-specific ion channel FluC (133 aa).

Helical transmembrane passes span Val-5 to Leu-25, Val-43 to Ile-63, Val-76 to Leu-96, and Ile-108 to Leu-128. Na(+) contacts are provided by Gly-83 and Thr-86.

The protein belongs to the fluoride channel Fluc/FEX (TC 1.A.43) family.

It is found in the cell inner membrane. It carries out the reaction fluoride(in) = fluoride(out). Na(+) is not transported, but it plays an essential structural role and its presence is essential for fluoride channel function. Fluoride-specific ion channel. Important for reducing fluoride concentration in the cell, thus reducing its toxicity. This is Fluoride-specific ion channel FluC from Saccharophagus degradans (strain 2-40 / ATCC 43961 / DSM 17024).